A 391-amino-acid chain; its full sequence is Lipid-A-disaccharide synthase (391 aa).

It belongs to the LpxB family.

The enzyme catalyses a lipid X + a UDP-2-N,3-O-bis[(3R)-3-hydroxyacyl]-alpha-D-glucosamine = a lipid A disaccharide + UDP + H(+). It participates in bacterial outer membrane biogenesis; LPS lipid A biosynthesis. Condensation of UDP-2,3-diacylglucosamine and 2,3-diacylglucosamine-1-phosphate to form lipid A disaccharide, a precursor of lipid A, a phosphorylated glycolipid that anchors the lipopolysaccharide to the outer membrane of the cell. The sequence is that of Lipid-A-disaccharide synthase from Aromatoleum aromaticum (strain DSM 19018 / LMG 30748 / EbN1) (Azoarcus sp. (strain EbN1)).